Here is a 151-residue protein sequence, read N- to C-terminus: uncharacterized protein (151 aa).

Residues Met1–Arg77 are disordered. Low complexity-rich tracts occupy residues Pro19–Asn54 and Ser63–Ser76.

This is an uncharacterized protein from Methanothermobacter marburgensis (strain ATCC BAA-927 / DSM 2133 / JCM 14651 / NBRC 100331 / OCM 82 / Marburg) (Methanobacterium thermoautotrophicum).